Reading from the N-terminus, the 80-residue chain is Spermatid-specific protein S2 (80 aa).

Positions V1–R36 are enriched in basic residues. The tract at residues V1–P44 is disordered.

It is found in the nucleus. It localises to the chromosome. Involved in nuclear basic protein transition: histones are replaced by spermatid specific proteins which are themselves replaced by protamines in late spermatids. This Scyliorhinus canicula (Small-spotted catshark) protein is Spermatid-specific protein S2.